The following is a 222-amino-acid chain: Sperm acrosome-associated protein 9 (222 aa).

The disordered stretch occupies residues 164–222 (QHVSEPQAHQESTRGAARPAQAIGTQPRATKHKCRQLTKASLKPRGCSKPPWRPPGGKL).

In terms of assembly, microtubule inner protein component of sperm flagellar doublet microtubules. Interacts with CABP1 and CALR. Interacts with INCA1. Interacts with microtubules.

The protein resides in the cytoplasm. The protein localises to the cytoplasmic vesicle. Its subcellular location is the secretory vesicle. It localises to the acrosome. It is found in the cytoskeleton. The protein resides in the cilium basal body. The protein localises to the flagellum axoneme. Its subcellular location is the cilium axoneme. It localises to the nucleus. Microtubule inner protein (MIP) part of the dynein-decorated doublet microtubules (DMTs) of multiciliated respiratory cells and the distal singlet microtubules of monoflagellated spermatozoa. Forms an extensive interaction network cross-linking the lumen of axonemal doublet microtubules. This Homo sapiens (Human) protein is Sperm acrosome-associated protein 9.